Consider the following 382-residue polypeptide: F-box/kelch-repeat protein At3g16580 (382 aa).

An F-box domain is found at 9 to 55; sequence WEFSLSLPWELIEEILSRVPPESLLRFKTVSKQWNALFRDKTFINNH. 2 Kelch repeats span residues 150–196 and 334–381; these read KIFA…NIYT and WIYV…AELQ.

The protein is F-box/kelch-repeat protein At3g16580 of Arabidopsis thaliana (Mouse-ear cress).